A 264-amino-acid polypeptide reads, in one-letter code: MERVRGACQSPILILLAIVLPFPSTSGPAIHPLIESLAARIRQRRAQLPELSPFALDSVMESISGQLDGEELLISNELHRCRGMRKLHLEIARLGGGLQVLHCVFFPDPRFDLPIFGADIVAGPAGISAAIVDLSPVGLTMPEALLHGLESLPIPAFQQVRELPEWGSIFSPFVQFIRPASSQEESWFVDLADGYLKALISSVIDATPDASDAASTIQRHKSQLSYCIQQKRNDKTRGVLEKAFNPQWADRYIEEILFEDPPPL.

Belongs to the HY2 family.

The enzyme catalyses (2R,3Z)-phycocyanobilin + 4 oxidized [2Fe-2S]-[ferredoxin] = biliverdin IXalpha + 4 reduced [2Fe-2S]-[ferredoxin] + 4 H(+). In terms of biological role, catalyzes the four-electron reduction of biliverdin IX-alpha (2-electron reduction at both the A and D rings); the reaction proceeds via an isolatable 2-electron intermediate, 181,182-dihydrobiliverdin. This Prochlorococcus marinus (strain MIT 9313) protein is Phycocyanobilin:ferredoxin oxidoreductase (pcyA).